The primary structure comprises 414 residues: Voltage-gated ClC-type chloride channel ClcB (414 aa).

The next 11 membrane-spanning stretches (helical) occupy residues 5-25 (LVIS…FHQA), 54-74 (ALTP…YQRY), 116-136 (SAIG…SVFA), 147-167 (LWVA…PLAG), 169-189 (LFIA…PVVI), 220-240 (VQYF…PLFL), 255-275 (LLPP…SLIF), 292-312 (TPPG…AVLA), 327-347 (LFVG…WPVL), 353-373 (LLMA…APIM), and 381-401 (MTGE…ATTI).

This sequence belongs to the chloride channel (TC 2.A.49) family. ClcB subfamily.

It localises to the cell inner membrane. Probably acts as an electrical shunt for an outwardly-directed proton pump that is linked to amino acid decarboxylation, as part of the extreme acid resistance (XAR) response. The sequence is that of Voltage-gated ClC-type chloride channel ClcB from Yersinia pestis.